Reading from the N-terminus, the 329-residue chain is NADH-quinone oxidoreductase subunit H 1 (329 aa).

8 helical membrane-spanning segments follow: residues 12 to 32, 78 to 98, 120 to 140, 159 to 179, 191 to 211, 242 to 262, 270 to 290, and 308 to 328; these read LAKI…LVFA, WLFY…FAVI, VGLL…ALGG, LISY…LAGS, GIWF…SIAA, LFFV…TTFF, WLPP…FFIW, and WKVL…ILML.

It belongs to the complex I subunit 1 family. In terms of assembly, NDH-1 is composed of 14 different subunits. Subunits NuoA, H, J, K, L, M, N constitute the membrane sector of the complex.

It is found in the cell inner membrane. The catalysed reaction is a quinone + NADH + 5 H(+)(in) = a quinol + NAD(+) + 4 H(+)(out). Functionally, NDH-1 shuttles electrons from NADH, via FMN and iron-sulfur (Fe-S) centers, to quinones in the respiratory chain. The immediate electron acceptor for the enzyme in this species is believed to be ubiquinone. Couples the redox reaction to proton translocation (for every two electrons transferred, four hydrogen ions are translocated across the cytoplasmic membrane), and thus conserves the redox energy in a proton gradient. This subunit may bind ubiquinone. This Geobacter metallireducens (strain ATCC 53774 / DSM 7210 / GS-15) protein is NADH-quinone oxidoreductase subunit H 1.